We begin with the raw amino-acid sequence, 149 residues long: Azurin (149 aa).

The N-terminal stretch at 1 to 20 is a signal peptide; that stretch reads MLAKATLAIVLSAASLPVLA. In terms of domain architecture, Plastocyanin-like spans 21 to 149; sequence AQCEATIESN…MMKGTLKLSN (129 aa). A disulfide bridge connects residues Cys23 and Cys46. 4 residues coordinate Cu cation: His66, Cys132, His137, and Met141.

The protein resides in the periplasm. In terms of biological role, transfers electrons from cytochrome c551 to cytochrome oxidase. The protein is Azurin (azu) of Achromobacter denitrificans (Alcaligenes denitrificans).